The sequence spans 126 residues: Large ribosomal subunit protein bL19 (126 aa).

The protein belongs to the bacterial ribosomal protein bL19 family.

In terms of biological role, this protein is located at the 30S-50S ribosomal subunit interface and may play a role in the structure and function of the aminoacyl-tRNA binding site. This chain is Large ribosomal subunit protein bL19, found in Paracoccus denitrificans (strain Pd 1222).